We begin with the raw amino-acid sequence, 98 residues long: Integration host factor subunit beta (98 aa).

This sequence belongs to the bacterial histone-like protein family. In terms of assembly, heterodimer of an alpha and a beta chain.

Functionally, this protein is one of the two subunits of integration host factor, a specific DNA-binding protein that functions in genetic recombination as well as in transcriptional and translational control. In Pseudomonas syringae pv. tomato (strain ATCC BAA-871 / DC3000), this protein is Integration host factor subunit beta.